The following is a 562-amino-acid chain: uncharacterized protein (562 aa).

The next 5 helical transmembrane spans lie at valine 4–leucine 26, glycine 33–phenylalanine 55, alanine 59–glycine 78, leucine 90–phenylalanine 112, and isoleucine 159–alanine 181. RCK C-terminal domains lie at proline 207–threonine 287 and leucine 295–glutamine 375. 6 consecutive transmembrane segments (helical) span residues isoleucine 385–serine 402, glycine 406–leucine 428, leucine 449–glutamine 471, leucine 476–histidine 498, valine 505–alanine 524, and valine 539–valine 561.

The protein belongs to the AAE transporter (TC 2.A.81) family.

It localises to the cell membrane. This is an uncharacterized protein from Bradyrhizobium diazoefficiens (strain JCM 10833 / BCRC 13528 / IAM 13628 / NBRC 14792 / USDA 110).